We begin with the raw amino-acid sequence, 507 residues long: ATP synthase subunit alpha (507 aa).

168-175 (GDRQTGKT) is a binding site for ATP.

The protein belongs to the ATPase alpha/beta chains family. As to quaternary structure, F-type ATPases have 2 components, CF(1) - the catalytic core - and CF(0) - the membrane proton channel. CF(1) has five subunits: alpha(3), beta(3), gamma(1), delta(1), epsilon(1). CF(0) has three main subunits: a(1), b(2) and c(9-12). The alpha and beta chains form an alternating ring which encloses part of the gamma chain. CF(1) is attached to CF(0) by a central stalk formed by the gamma and epsilon chains, while a peripheral stalk is formed by the delta and b chains.

The protein localises to the cell membrane. The catalysed reaction is ATP + H2O + 4 H(+)(in) = ADP + phosphate + 5 H(+)(out). Functionally, produces ATP from ADP in the presence of a proton gradient across the membrane. The alpha chain is a regulatory subunit. This Mesomycoplasma hyopneumoniae (strain 7448) (Mycoplasma hyopneumoniae) protein is ATP synthase subunit alpha.